The following is a 277-amino-acid chain: MALQGNVAILTRLQDTASAVQQFKQTNPQVADVTVLAVAEDSDVTQTVTSSSASAKENAFDGIVSFSEQTEELGIELGAVLPLLKTGGVLQLHVANVKEEKKNAILMALMIGGLVDTSDKQESSPFYPEFSDAVSFTSKKQSFESAAIPLAVKSTTTQPIKKWTVLADDFGDDQDDDIIDEDTLLDDTDEVLQAAKADCGDAVGGKKRACKNCTCGLKDENDKPVMSEKDLNSLVSGCGNCFKGDAFRCGSCPFLGKPAFKPGMEKVLLNLDSSDDI.

The interval 1 to 134 (MALQGNVAIL…PFYPEFSDAV (134 aa)) is N-terminal SAM-like domain. The segment at 135–191 (SFTSKKQSFESAAIPLAVKSTTTQPIKKWTVLADDFGDDQDDDIIDEDTLLDDTDEV) is linker. [2Fe-2S] cluster is bound by residues Cys199, Cys210, Cys213, and Cys215. The segment at 199-215 (CGDAVGGKKRACKNCTC) is fe-S binding site A. 4 residues coordinate [4Fe-4S] cluster: Cys238, Cys241, Cys249, and Cys252. 2 short sequence motifs (cx2C motif) span residues 238-241 (CGNC) and 249-252 (CGSC). The segment at 238-252 (CGNCFKGDAFRCGSC) is fe-S binding site B.

It belongs to the anamorsin family. In terms of assembly, monomer. It depends on [2Fe-2S] cluster as a cofactor. [4Fe-4S] cluster is required as a cofactor.

It is found in the cytoplasm. The protein localises to the mitochondrion intermembrane space. Functionally, component of the cytosolic iron-sulfur (Fe-S) protein assembly (CIA) machinery. Required for the maturation of extramitochondrial Fe-S proteins. Part of an electron transfer chain functioning in an early step of cytosolic Fe-S biogenesis, facilitating the de novo assembly of a [4Fe-4S] cluster on the cytosolic Fe-S scaffold complex. Electrons are transferred from NADPH via a FAD- and FMN-containing diflavin oxidoreductase. Together with the diflavin oxidoreductase, also required for the assembly of the diferric tyrosyl radical cofactor of ribonucleotide reductase (RNR), probably by providing electrons for reduction during radical cofactor maturation in the catalytic small subunit. The sequence is that of Anamorsin homolog from Phytophthora infestans (strain T30-4) (Potato late blight agent).